Reading from the N-terminus, the 307-residue chain is Acetaldehyde dehydrogenase (307 aa).

NAD(+) is bound at residue 12-15 (SGNI). The active-site Acyl-thioester intermediate is the Cys130. NAD(+) contacts are provided by residues 161–169 (SVGPGTRQN) and Asn272.

The protein belongs to the acetaldehyde dehydrogenase family.

It carries out the reaction acetaldehyde + NAD(+) + CoA = acetyl-CoA + NADH + H(+). The polypeptide is Acetaldehyde dehydrogenase (Shewanella halifaxensis (strain HAW-EB4)).